Reading from the N-terminus, the 56-residue chain is Metallothionein (56 aa).

11 residues coordinate Zn(2+): Cys-9, Cys-11, Cys-14, Cys-16, Cys-32, Cys-36, His-40, Cys-47, His-49, Cys-52, and Cys-54.

Belongs to the metallothionein superfamily. Type 14 family.

Its function is as follows. May play a role in essential metal ion homeostasis (especially zinc homeostasis) and resistance to certain non-essential metal ions. Binds four zinc ions. The polypeptide is Metallothionein (smtA) (Synechococcus elongatus (strain ATCC 33912 / PCC 7942 / FACHB-805) (Anacystis nidulans R2)).